Reading from the N-terminus, the 98-residue chain is UPF0251 protein Sputcn32_0687 (98 aa).

Belongs to the UPF0251 family.

The sequence is that of UPF0251 protein Sputcn32_0687 from Shewanella putrefaciens (strain CN-32 / ATCC BAA-453).